A 677-amino-acid polypeptide reads, in one-letter code: Protein windpipe (677 aa).

A signal peptide spans 1–20; sequence MERVHLTAWLALFLIVVANA. At 21-451 the chain is on the extracellular side; that stretch reads TPTPARTPTG…IGKPKDDSSA (431 aa). N-linked (GlcNAc...) asparagine glycosylation is found at Asn-53 and Asn-80. LRR repeat units lie at residues 91–116, 118–133, 134–156, and 158–183; these read LPEL…GLKR, NLKH…RKLP, QHLQ…LTHM, and QLHQ…NWLV. Residues Asn-145 and Asn-170 are each glycosylated (N-linked (GlcNAc...) asparagine). Positions 184–216 constitute an LRRCT domain; sequence ERIVYMEHPVVCSYPLEFRGRSWLQLKQDEICK. 3 disordered regions span residues 264–285, 298–317, and 325–385; these read AKKV…SGDL, TVAE…ASPS, and KDED…TVFS. The segment covering 347 to 372 has biased composition (basic and acidic residues); the sequence is SKVKITSEDDIDSDGKPEESDVRPLE. Polar residues predominate over residues 374-385; that stretch reads PENSENPDTVFS. The helical transmembrane segment at 452-472 threads the bilayer; it reads IYYLLAVIGLIVVGLVLFVAI. At 473–677 the chain is on the cytoplasmic side; the sequence is KRCKYDSNAA…EPTHQVINGH (205 aa). 2 disordered regions span residues 502-523 and 539-677; these read LGKP…LIGE and NGEA…INGH. The segment covering 595 to 607 has biased composition (low complexity); it reads AQQQQLAEQNNNE.

As to quaternary structure, interacts with dome; the interaction promotes internalization of dome and its subsequent lysosomal degradation. In adult intestine, expressed in both small progenitor cells and large nuclei enterocytes (at protein level). During embryogenesis, restricted to the developing trachea.

Its subcellular location is the cell membrane. Functionally, plays a role in negative regulation of the JAK/STAT pathway by binding to the receptor dome and promoting its internalization for subsequent lysosomal degradation, thereby reducing JAK/STAT signaling. The chain is Protein windpipe from Drosophila melanogaster (Fruit fly).